The sequence spans 382 residues: Glutamyl-tRNA reductase (382 aa).

Residues 38 to 41 (TCNR), serine 85, 90 to 92 (ENQ), and glutamine 96 each bind substrate. The active-site Nucleophile is the cysteine 39. Residue 164–169 (GAGEMG) participates in NADP(+) binding.

The protein belongs to the glutamyl-tRNA reductase family. Homodimer.

The catalysed reaction is (S)-4-amino-5-oxopentanoate + tRNA(Glu) + NADP(+) = L-glutamyl-tRNA(Glu) + NADPH + H(+). It participates in porphyrin-containing compound metabolism; protoporphyrin-IX biosynthesis; 5-aminolevulinate from L-glutamyl-tRNA(Glu): step 1/2. Its function is as follows. Catalyzes the NADPH-dependent reduction of glutamyl-tRNA(Glu) to glutamate 1-semialdehyde (GSA). The protein is Glutamyl-tRNA reductase of Methanococcus maripaludis (strain C5 / ATCC BAA-1333).